The sequence spans 191 residues: uncharacterized protein (191 aa).

Residues 1 to 17 form the signal peptide; that stretch reads MESIILSIAIFIGVLLG. The tract at residues 82–148 is disordered; it reads TFSGSRTSPD…DVGAGSGSSI (67 aa). A helical transmembrane segment spans residues 168-188; that stretch reads VAVLITAAILSAPVTAIALLE.

It is found in the membrane. This is an uncharacterized protein from Saccharomyces cerevisiae (strain ATCC 204508 / S288c) (Baker's yeast).